Consider the following 90-residue polypeptide: DNA-directed RNA polymerase subunit omega (90 aa).

The interval 69 to 90 (RQEQQEQEAAELAAVSSIAHTR) is disordered.

Belongs to the RNA polymerase subunit omega family. As to quaternary structure, the RNAP catalytic core consists of 2 alpha, 1 beta, 1 beta' and 1 omega subunit. When a sigma factor is associated with the core the holoenzyme is formed, which can initiate transcription.

It carries out the reaction RNA(n) + a ribonucleoside 5'-triphosphate = RNA(n+1) + diphosphate. Functionally, promotes RNA polymerase assembly. Latches the N- and C-terminal regions of the beta' subunit thereby facilitating its interaction with the beta and alpha subunits. In Vibrio atlanticus (strain LGP32) (Vibrio splendidus (strain Mel32)), this protein is DNA-directed RNA polymerase subunit omega.